Reading from the N-terminus, the 534-residue chain is Membrane-bound lytic murein transglycosylase F (534 aa).

The signal sequence occupies residues 1–24; it reads MQISQFNRLKRSALLFASVLLLSA. The interval 25-285 is non-LT domain; it reads CQIESEPKSE…TLEEKYIGHI (261 aa). The LT domain stretch occupies residues 287 to 534; the sequence is AFDYVDTRAF…AEQTPVPKAE (248 aa). The active site involves glutamate 330. The interval 507–534 is disordered; it reads VSGAVEVTPPPEENAPQEAEQTPVPKAE. Positions 520–534 are enriched in low complexity; that stretch reads NAPQEAEQTPVPKAE.

It in the N-terminal section; belongs to the bacterial solute-binding protein 3 family. This sequence in the C-terminal section; belongs to the transglycosylase Slt family.

Its subcellular location is the cell outer membrane. It carries out the reaction Exolytic cleavage of the (1-&gt;4)-beta-glycosidic linkage between N-acetylmuramic acid (MurNAc) and N-acetylglucosamine (GlcNAc) residues in peptidoglycan, from either the reducing or the non-reducing ends of the peptidoglycan chains, with concomitant formation of a 1,6-anhydrobond in the MurNAc residue.. Its function is as follows. Murein-degrading enzyme that degrades murein glycan strands and insoluble, high-molecular weight murein sacculi, with the concomitant formation of a 1,6-anhydromuramoyl product. Lytic transglycosylases (LTs) play an integral role in the metabolism of the peptidoglycan (PG) sacculus. Their lytic action creates space within the PG sacculus to allow for its expansion as well as for the insertion of various structures such as secretion systems and flagella. This chain is Membrane-bound lytic murein transglycosylase F, found in Vibrio campbellii (strain ATCC BAA-1116).